A 265-amino-acid chain; its full sequence is Glutamate racemase (265 aa).

Residues 7–8 (DS) and 39–40 (YG) contribute to the substrate site. Catalysis depends on Cys-70, which acts as the Proton donor/acceptor. A substrate-binding site is contributed by 71–72 (NT). Residue Cys-177 is the Proton donor/acceptor of the active site.

The protein belongs to the aspartate/glutamate racemases family.

The catalysed reaction is L-glutamate = D-glutamate. It participates in cell wall biogenesis; peptidoglycan biosynthesis. Its function is as follows. Provides the (R)-glutamate required for cell wall biosynthesis. In Prochlorococcus marinus (strain NATL1A), this protein is Glutamate racemase.